The primary structure comprises 791 residues: Ataxin-1 (791 aa).

Basic and acidic residues predominate over residues 1-30; the sequence is MKSNQERSNECLPPKKREIPATSRPSEEKA. Residues 1-36 form a disordered region; sequence MKSNQERSNECLPPKKREIPATSRPSEEKATALPSD. Residue Lys16 forms a Glycyl lysine isopeptide (Lys-Gly) (interchain with G-Cter in SUMO) linkage. Phosphoserine is present on residues Ser81 and Ser87. Disordered stretches follow at residues 187 to 240 and 298 to 402; these read SQAP…TSPP and EVLN…HRSY. Residue Lys193 forms a Glycyl lysine isopeptide (Lys-Gly) (interchain with G-Cter in SUMO) linkage. At Ser213 the chain carries Phosphoserine. Residue Thr218 is modified to Phosphothreonine. Composition is skewed to polar residues over residues 219–236, 312–327, and 362–388; these read QQNQ…SGRA, ASSS…SSKS, and PNSS…TLND. Ser229 carries the post-translational modification Phosphoserine. The segment at 470–580 is self-association; sequence VGSPDMDTPG…TEDFIQSAEI (111 aa). The interaction with USP7 stretch occupies residues 514 to 791; that stretch reads LVTQAAYPAM…CIEGRSNVGK (278 aa). Residues 516–742 form an RNA-binding region; the sequence is TQAAYPAMVQ…FLSKIEPSKP (227 aa). Residues 538 to 669 form the AXH domain; sequence SPTTASPTLP…SLTLKNLKNG (132 aa). Glycyl lysine isopeptide (Lys-Gly) (interchain with G-Cter in SUMO) cross-links involve residues Lys585, Lys672, and Lys721. Positions 736–774 are disordered; it reads KIEPSKPTATRKRRWSAPETRKLEKSEDEPPLTLPKPSL. A Phosphoserine modification is found at Ser751. Residues 770–773 carry the Nuclear localization signal motif; sequence PKPS.

Belongs to the ATXN1 family. As to quaternary structure, homooligomer. Interacts with PQBP1, UBQLN4 and USP7. Interacts with ANP32A. Interacts with CIC. Directly interacts with RBPJ; this interaction is disrupted in the presence of Notch intracellular domain. Interacts with ATXN1L; competes with ATXN1L for RBPJ-binding. Found in a complex with CIC and ATXN1L. Post-translationally, ubiquitinated by UBE3A, leading to its degradation by the proteasome. The presence of poly-Gln repeats in trangenic models developed to replicate phenotypes of the spinocerebellar ataxia 1 disease (SCA1) impair ubiquitination and degradation, leading to accumulation of Atxn1 in neurons and subsequent toxicity. Sumoylation is dependent on nuclear localization and phosphorylation at Ser-751. As to expression, expressed in the cortex and hypothalamus (at protein level). Widely expressed. In brain, the pattern of distribution is limited to neuron populations.

The protein localises to the cytoplasm. It is found in the nucleus. In terms of biological role, chromatin-binding factor that repress Notch signaling in the absence of Notch intracellular domain by acting as a CBF1 corepressor. Binds to the HEY promoter and might assist, along with NCOR2, RBPJ-mediated repression. May be involved in RNA metabolism. In concert with CIC and ATXN1L, involved in brain development. In Mus musculus (Mouse), this protein is Ataxin-1 (Atxn1).